The primary structure comprises 213 residues: tRNA (guanine-N(7)-)-methyltransferase (213 aa).

Positions 44, 69, 96, and 118 each coordinate S-adenosyl-L-methionine. Aspartate 118 is an active-site residue. Lysine 122 provides a ligand contact to substrate. The interaction with RNA stretch occupies residues 124 to 129; that stretch reads RHEKRR. Substrate contacts are provided by residues aspartate 154 and 191 to 194; that span reads TEYE.

This sequence belongs to the class I-like SAM-binding methyltransferase superfamily. TrmB family.

The catalysed reaction is guanosine(46) in tRNA + S-adenosyl-L-methionine = N(7)-methylguanosine(46) in tRNA + S-adenosyl-L-homocysteine. Its pathway is tRNA modification; N(7)-methylguanine-tRNA biosynthesis. Catalyzes the formation of N(7)-methylguanine at position 46 (m7G46) in tRNA. The sequence is that of tRNA (guanine-N(7)-)-methyltransferase from Streptococcus thermophilus (strain CNRZ 1066).